A 290-amino-acid chain; its full sequence is Protein 3 (290 aa).

The sequence is that of Protein 3 from Lettuce big-vein associated virus (isolate Japan/Kagawa) (LBVaV).